Reading from the N-terminus, the 385-residue chain is Flap endonuclease 1 (385 aa).

An N-domain region spans residues methionine 1–arginine 104. Aspartate 34 contacts Mg(2+). DNA contacts are provided by arginine 47 and arginine 70. Positions 86, 158, 160, 179, and 181 each coordinate Mg(2+). Positions glycine 122 to tyrosine 253 are I-domain. Glutamate 158 is a DNA binding site. Residues glycine 231 and aspartate 233 each coordinate DNA. Aspartate 233 serves as a coordination point for Mg(2+). The interval threonine 336–phenylalanine 344 is interaction with PCNA. Residues threonine 346–lysine 385 are disordered. Positions alanine 368–lysine 385 are enriched in basic residues.

Belongs to the XPG/RAD2 endonuclease family. FEN1 subfamily. As to quaternary structure, interacts with PCNA. Three molecules of FEN1 bind to one PCNA trimer with each molecule binding to one PCNA monomer. PCNA stimulates the nuclease activity without altering cleavage specificity. Mg(2+) serves as cofactor. In terms of processing, phosphorylated. Phosphorylation upon DNA damage induces relocalization to the nuclear plasma.

The protein resides in the nucleus. The protein localises to the nucleolus. Its subcellular location is the nucleoplasm. It localises to the mitochondrion. Structure-specific nuclease with 5'-flap endonuclease and 5'-3' exonuclease activities involved in DNA replication and repair. During DNA replication, cleaves the 5'-overhanging flap structure that is generated by displacement synthesis when DNA polymerase encounters the 5'-end of a downstream Okazaki fragment. It enters the flap from the 5'-end and then tracks to cleave the flap base, leaving a nick for ligation. Also involved in the long patch base excision repair (LP-BER) pathway, by cleaving within the apurinic/apyrimidinic (AP) site-terminated flap. Acts as a genome stabilization factor that prevents flaps from equilibrating into structures that lead to duplications and deletions. Also possesses 5'-3' exonuclease activity on nicked or gapped double-stranded DNA, and exhibits RNase H activity. Also involved in replication and repair of rDNA and in repairing mitochondrial DNA. This chain is Flap endonuclease 1, found in Drosophila melanogaster (Fruit fly).